The chain runs to 406 residues: Putative 12-oxophytodienoate reductase 12 (406 aa).

FMN-binding positions include 41–43, A74, and Q119; that span reads PLT. 188–191 serves as a coordination point for substrate; sequence HAAN. Residues R240, G317, and 338-339 each bind FMN; that span reads GR.

The protein belongs to the NADH:flavin oxidoreductase/NADH oxidase family. Requires FMN as cofactor.

Its function is as follows. Putative oxophytodienoate reductase that may be involved in the biosynthesis or metabolism of oxylipin signaling molecules. This Oryza sativa subsp. japonica (Rice) protein is Putative 12-oxophytodienoate reductase 12 (OPR12).